A 218-amino-acid chain; its full sequence is Monomethylamine corrinoid protein 2 (218 aa).

Residues Met1–Glu91 form the B12-binding N-terminal domain. A B12-binding domain is found at Thr94–Lys218. Residue His107 participates in methylcob(III)alamin binding.

This sequence belongs to the methylamine corrinoid protein family. In terms of assembly, can form a complex with MtmB.

It participates in one-carbon metabolism; methanogenesis from methylamine. In terms of biological role, acts as a methyl group carrier between MtmB and MtbA. The chain is Monomethylamine corrinoid protein 2 (mtmC2) from Methanosarcina mazei (strain ATCC BAA-159 / DSM 3647 / Goe1 / Go1 / JCM 11833 / OCM 88) (Methanosarcina frisia).